Here is an 867-residue protein sequence, read N- to C-terminus: Nuclear body protein SP140 (867 aa).

The region spanning 22–138 (VAEIQNVEGQ…IYRSFQNVCY (117 aa)) is the HSR domain. Disordered stretches follow at residues 260–341 (TYST…EEPQ), 365–432 (TPQV…SEEL), and 486–580 (IANN…KHKD). Over residues 268–301 (KQGEEEGRNSPRKRNQDKEKYQESPEGRDKETFD) the composition is skewed to basic and acidic residues. Composition is skewed to acidic residues over residues 323 to 341 (EGEE…EEPQ) and 384 to 397 (EGEE…EMCD). Low complexity predominate over residues 404-416 (ASSSLARRGSVSS). Basic residues-rich tracts occupy residues 494-512 (KPKR…RMRM) and 567-577 (QKRVRSRASRK). Positions 495–514 (PKRKRRKKRGHGWSRMRMRR) match the Nuclear localization signal motif. Residues 580 to 661 (DETVDFKAPL…RWLMENGFLP (82 aa)) enclose the SAND domain. The PHD-type zinc finger occupies 690 to 736 (LDECEVCRDGGELFCCDTCSRVFHEDCHIPPVEAERTPWNCIFCRMK). At Thr-726 the chain carries Phosphothreonine. One can recognise a Bromo domain in the interval 754 to 857 (QMCPEEQLKC…AEFEKNFKEV (104 aa)).

In terms of assembly, interacts with PIN1. In terms of processing, phosphorylation at Thr-726 promotes binding of PIN1 and subsequent isomerization of Pro-727. In terms of tissue distribution, high levels in spleen and peripheral blood leukocytes, much lower levels in tonsils, thymus, prostate, ovary, small intestine, and colon. Very low levels in heart, brain, placenta, lung, liver, skeletal muscle, kidney, and pancreas. Not detected in brain, liver and muscle.

Its subcellular location is the nucleus. The protein localises to the PML body. It localises to the cytoplasm. Its function is as follows. Component of the nuclear body, also known as nuclear domain 10, PML oncogenic domain, and KR body. May be involved in the pathogenesis of acute promyelocytic leukemia and viral infection. May play a role in chromatin-mediated regulation of gene expression although it does not bind to histone H3 tails. The chain is Nuclear body protein SP140 from Homo sapiens (Human).